The primary structure comprises 827 residues: Mitogen-activated protein kinase kinase kinase kinase 1 (827 aa).

One can recognise a Protein kinase domain in the interval 17 to 274 (YDLLQRLGGG…ATKMLSHQLV (258 aa)). Residues 23 to 31 (LGGGTYGEV) and K46 contribute to the ATP site. Residue D137 is the Proton acceptor of the active site. Position 165 is a phosphothreonine; by autocatalysis (T165). Phosphoserine; by autocatalysis is present on S171. T175 carries the post-translational modification Phosphothreonine; by autocatalysis. A disordered region spans residues 296-315 (KGLPVDIEDEEPEPPPAIPR). T354 carries the phosphothreonine; by autocatalysis modification. The tract at residues 359–485 (PPAHFGSTSP…KMRGKMENEK (127 aa)) is disordered. Residues S373, S375, S403, S405, and S419 each carry the phosphoserine modification. Over residues 374–383 (DSDDDYDDVD) the composition is skewed to acidic residues. Pro residues-rich tracts occupy residues 429–443 (GPPP…PPAT) and 461–471 (APEPGQPPLVP). A compositionally biased stretch (basic and acidic residues) spans 472–485 (PRKEKMRGKMENEK). Residues 501–806 (PLQIHSTAAW…TFRLLCSPRP (306 aa)) form the CNH domain. S592 bears the Phosphoserine mark.

Belongs to the protein kinase superfamily. STE Ser/Thr protein kinase family. STE20 subfamily. As to quaternary structure, interacts with MAP3K1. Interacts with FBXW8. Interacts with CLNK (via its SH2 domain). Mg(2+) is required as a cofactor. In terms of processing, autophosphorylates: phosphorylation promotes ubiquitination by the Cul7-RING(FBXW8) ubiquitin-protein ligase complex, leading to its degradation by the proteasome. Tyrosine-phosphorylated after activation of hemopoietic cells. Post-translationally, ubiquitinated by the Cul7-RING(FBXW8) ubiquitin-protein ligase complex following autophosphorylation, leading to its degradation by the proteasome. As to expression, expressed in hemopoietic cells (at protein level). Ubiquitously expressed in all tissues examined at embryonic stage 16.5 dpc with high levels in lung, heart and fetal liver. In the neonate, expression is restricted to the tissues which undergo lineage decisions, lung, thymus, liver, kidney and brain. In the adult, expression is limited to hemopoietic organs, thymus, bone marrow, and spleen and to the testis.

It carries out the reaction L-seryl-[protein] + ATP = O-phospho-L-seryl-[protein] + ADP + H(+). The enzyme catalyses L-threonyl-[protein] + ATP = O-phospho-L-threonyl-[protein] + ADP + H(+). Serine/threonine-protein kinase, which plays a role in the response to environmental stress. Appears to act upstream of the JUN N-terminal pathway. Activator of the Hippo signaling pathway which plays a pivotal role in organ size control and tumor suppression by restricting proliferation and promoting apoptosis. MAP4Ks act in parallel to and are partially redundant with STK3/MST2 and STK4/MST2 in the phosphorylation and activation of LATS1/2, and establish MAP4Ks as components of the expanded Hippo pathway. May play a role in hematopoietic lineage decisions and growth regulation. Together with CLNK, it enhances CD3-triggered activation of T-cells and subsequent IL2 production. This Mus musculus (Mouse) protein is Mitogen-activated protein kinase kinase kinase kinase 1 (Map4k1).